Here is a 217-residue protein sequence, read N- to C-terminus: Probable transaldolase (217 aa).

Residue K83 is the Schiff-base intermediate with substrate of the active site.

This sequence belongs to the transaldolase family. Type 3B subfamily.

The protein resides in the cytoplasm. It catalyses the reaction D-sedoheptulose 7-phosphate + D-glyceraldehyde 3-phosphate = D-erythrose 4-phosphate + beta-D-fructose 6-phosphate. Its pathway is carbohydrate degradation; pentose phosphate pathway; D-glyceraldehyde 3-phosphate and beta-D-fructose 6-phosphate from D-ribose 5-phosphate and D-xylulose 5-phosphate (non-oxidative stage): step 2/3. Functionally, transaldolase is important for the balance of metabolites in the pentose-phosphate pathway. This chain is Probable transaldolase, found in Paracoccus denitrificans (strain Pd 1222).